Consider the following 268-residue polypeptide: Microtubule-associated protein RP/EB family member 1 (268 aa).

At A2 the chain carries N-acetylalanine. In terms of domain architecture, Calponin-homology (CH) spans 14–116; the sequence is NLSRHDMLAW…FVQWFKKFFD (103 aa). K66 is modified (N6-crotonyllysine). Y124 is modified (phosphotyrosine). The interaction with MTUS2/TIP150 stretch occupies residues 124 to 268; that stretch reads YDPVAARQGQ…GGPQEEQEEY (145 aa). The segment at 146 to 187 is disordered; sequence LNKPKKPLTSSSAAPQRPISTQRTAAAPKAGPGVVRKNPGVG. The span at 153 to 169 shows a compositional bias: polar residues; the sequence is LTSSSAAPQRPISTQRT. Phosphoserine occurs at positions 155 and 165. One can recognise an EB1 C-terminal domain in the interval 185-255; sequence GVGNGDDEAA…LYATDEGFVI (71 aa). The segment at 185-268 is interaction with CDK5RAP2; it reads GVGNGDDEAA…GGPQEEQEEY (84 aa). Residues 206 to 211 form an interaction with APC region; the sequence is TVEDLE. Residues 208-268 are DCTN1-binding; that stretch reads EDLEKERDFY…GGPQEEQEEY (61 aa). Residue K220 is modified to N6-acetyllysine. Residues 220–242 form an APC-binding region; the sequence is KLRNIELICQENEGENDPVLQRI. The tract at residues 232–255 is interaction with SKA1; sequence EGENDPVLQRIVDILYATDEGFVI.

This sequence belongs to the MAPRE family. As to quaternary structure, homodimer. Heterodimer with MAPRE3. Interacts with DCTN1, DCTN2, TERF1 and dynein intermediate chain. Interaction with DIAPH1 and DIAPH2. Interacts (via C-terminal residues 206-211) with APC (via C-terminal residues 2674-2843); the interaction inhibits association with and bundling of F-actin. Interacts with CLASP2, DST, KIF2C and STIM1; probably required for their targeting to the growing microtubule plus ends. Interacts with MTUS2; interaction is direct and probably targets MTUS2 to microtubules. Interacts (via C-terminus) with SKA1 (via SXIP motif); the interaction is direct and stabilizes the kinetochore-microtubule attachment of the SKA1 complex. Interacts with APC2. Interacts with CLASP1. Interacts with CDK5RAP2. Interacts with MACF1. Interacts with RABL2/RABL2A; binds preferentially to GTP-bound RABL2. Interacts with KCNAB2. Interacts (via C-terminus) with CLIP1. Interacts with SLAIN2 and SLAIN1. Interacts with KIF18B; this interaction is required for efficient accumulation of KIF18B at microtubule plus ends. Interacts with MISP. Interacts with KNSTRN. Interacts with NCKAP5L. Interacts with CAMSAP2. Interacts with PDE4DIP isoform 13/MMG8/SMYLE; this interaction is required for its recruitment to the Golgi apparatus. Forms a pericentrosomal complex with AKAP9, CDK5RAP2 and PDE4DIP isoform 13/MMG8/SMYLE; within this complex, MAPRE1 binding to CDK5RAP2 may be mediated by PDE4DIP. Interacts with AKNA. Interacts with GAS2L1, GAS2L2, and GAS2L3. Interacts with RARRES1 and AGBL2. Post-translationally, acetylation at Lys-220 by KAT2B/PCAF promotes dynamic kinetochore-microtubule interactions in early mitosis. In terms of processing, crotonylated by KAT5 during mitosis, promoting astral microtubule plasticity and dynamic connection between astral microtubules and the cortex during mitotic chromosome segregation, thereby ensuring accurate spindle positioning in mitosis. Decrotonylated by HDAC3. In terms of tissue distribution, ubiquitously expressed.

The protein resides in the cytoplasm. It is found in the cytoskeleton. The protein localises to the microtubule organizing center. It localises to the centrosome. Its subcellular location is the golgi apparatus. The protein resides in the spindle. It is found in the spindle pole. Its function is as follows. Plus-end tracking protein (+TIP) that binds to the plus-end of microtubules and regulates the dynamics of the microtubule cytoskeleton. Recruits other +TIP proteins to microtubules by binding to a conserved Ser-X-Leu-Pro (SXLP) motif in their polypeptide chains. Promotes cytoplasmic microtubule nucleation and elongation. Involved in mitotic spindle positioning by stabilizing microtubules and promoting dynamic connection between astral microtubules and the cortex during mitotic chromosome segregation. Assists chromosome alignment in metaphase by recruiting the SKA complex to the spindle and stabilizing its interactions with microtubule bundles (K-fibers). Also acts as a regulator of minus-end microtubule organization: interacts with the complex formed by AKAP9 and PDE4DIP, leading to recruit CAMSAP2 to the Golgi apparatus, thereby tethering non-centrosomal minus-end microtubules to the Golgi, an important step for polarized cell movement. Promotes elongation of CAMSAP2-decorated microtubule stretches on the minus-end of microtubules. Acts as a regulator of autophagosome transport via interaction with CAMSAP2. Functions downstream of Rho GTPases and DIAPH1 in stable microtubule formation. May play a role in cell migration. This Homo sapiens (Human) protein is Microtubule-associated protein RP/EB family member 1.